The primary structure comprises 647 residues: DNA mismatch repair protein MutL (647 aa).

The protein belongs to the DNA mismatch repair MutL/HexB family.

Its function is as follows. This protein is involved in the repair of mismatches in DNA. It is required for dam-dependent methyl-directed DNA mismatch repair. May act as a 'molecular matchmaker', a protein that promotes the formation of a stable complex between two or more DNA-binding proteins in an ATP-dependent manner without itself being part of a final effector complex. The polypeptide is DNA mismatch repair protein MutL (Bacillus cereus (strain G9842)).